Consider the following 641-residue polypeptide: Putative ABC transporter ATP-binding protein MA_0870 (641 aa).

Positions 10 to 250 (IEIKDLWYTY…IEVFHRLGLR (241 aa)) constitute an ABC transporter 1 domain. 44 to 51 (GPTGCGKS) is an ATP binding site. The interval 286 to 332 (VKTPRNFSNPEEETGRRTDPAERNEFVNTGSGNIKYGDNRSENKGSE) is disordered. 2 stretches are compositionally biased toward basic and acidic residues: residues 298–310 (ETGRRTDPAERNE) and 322–332 (GDNRSENKGSE). One can recognise an ABC transporter 2 domain in the interval 338-566 (ISIRDLWSGY…IEILKQASLT (229 aa)). 371-378 (GTNGSGKS) lines the ATP pocket.

This sequence belongs to the ABC transporter superfamily.

The protein localises to the cell membrane. Functionally, probably part of an ABC transporter complex. Responsible for energy coupling to the transport system. This Methanosarcina acetivorans (strain ATCC 35395 / DSM 2834 / JCM 12185 / C2A) protein is Putative ABC transporter ATP-binding protein MA_0870.